The chain runs to 270 residues: 3-methyl-2-oxobutanoate hydroxymethyltransferase (270 aa).

Positions 41 and 80 each coordinate Mg(2+). 3-methyl-2-oxobutanoate is bound by residues 41-42 (DS), Asp-80, and Lys-109. Mg(2+) is bound at residue Glu-111. Catalysis depends on Glu-178, which acts as the Proton acceptor.

It belongs to the PanB family. As to quaternary structure, homodecamer; pentamer of dimers. Mg(2+) is required as a cofactor.

It is found in the cytoplasm. It catalyses the reaction 3-methyl-2-oxobutanoate + (6R)-5,10-methylene-5,6,7,8-tetrahydrofolate + H2O = 2-dehydropantoate + (6S)-5,6,7,8-tetrahydrofolate. Its pathway is cofactor biosynthesis; (R)-pantothenate biosynthesis; (R)-pantoate from 3-methyl-2-oxobutanoate: step 1/2. Catalyzes the reversible reaction in which hydroxymethyl group from 5,10-methylenetetrahydrofolate is transferred onto alpha-ketoisovalerate to form ketopantoate. The polypeptide is 3-methyl-2-oxobutanoate hydroxymethyltransferase (Thermotoga sp. (strain RQ2)).